Consider the following 510-residue polypeptide: Glycosyl hydrolase YngK (510 aa).

An N-terminal signal peptide occupies residues 1-30 (MKVCQKSIVRFLVSLIIGTFVISVPFMANA).

It belongs to the glycosyl hydrolase-like 10 (GHL10) family.

The sequence is that of Glycosyl hydrolase YngK (yngK) from Bacillus subtilis (strain 168).